A 415-amino-acid chain; its full sequence is Gamma-glutamyl phosphate reductase (415 aa).

The protein belongs to the gamma-glutamyl phosphate reductase family.

The protein resides in the cytoplasm. The enzyme catalyses L-glutamate 5-semialdehyde + phosphate + NADP(+) = L-glutamyl 5-phosphate + NADPH + H(+). It participates in amino-acid biosynthesis; L-proline biosynthesis; L-glutamate 5-semialdehyde from L-glutamate: step 2/2. In terms of biological role, catalyzes the NADPH-dependent reduction of L-glutamate 5-phosphate into L-glutamate 5-semialdehyde and phosphate. The product spontaneously undergoes cyclization to form 1-pyrroline-5-carboxylate. The chain is Gamma-glutamyl phosphate reductase from Bacillus cereus (strain ZK / E33L).